Consider the following 71-residue polypeptide: Conotoxin ba5b (71 aa).

The N-terminal stretch at 1–19 (MLCLPVFITLLLLVSPSAA) is a signal peptide. Residues 20–52 (LPVESELQRDLTQDSPKDFRIREPLLLSKMFDR) constitute a propeptide that is removed on maturation. 2 cysteine pairs are disulfide-bonded: Cys-54-Cys-63 and Cys-55-Cys-64. Cys-64 bears the Cysteine amide mark. Residues 66–71 (RYQRGS) constitute a propeptide that is removed on maturation.

This sequence belongs to the conotoxin T superfamily. Expressed by the venom duct.

The protein localises to the secreted. This chain is Conotoxin ba5b, found in Conus bayani (Bayan's cone).